The sequence spans 649 residues: Acetyl-coenzyme A synthetase (649 aa).

CoA is bound by residues 189–192 (RGGK), Thr311, and Asn335. Residues 387–389 (GEP), 411–416 (DTWWQT), Asp500, and Arg515 contribute to the ATP site. CoA is bound at residue Ser523. Position 526 (Arg526) interacts with ATP. Mg(2+) is bound by residues Val537, His539, and Val542. Arg584 lines the CoA pocket. Lys609 is subject to N6-acetyllysine.

The protein belongs to the ATP-dependent AMP-binding enzyme family. Mg(2+) is required as a cofactor. Post-translationally, acetylated. Deacetylation by the SIR2-homolog deacetylase activates the enzyme.

It carries out the reaction acetate + ATP + CoA = acetyl-CoA + AMP + diphosphate. Catalyzes the conversion of acetate into acetyl-CoA (AcCoA), an essential intermediate at the junction of anabolic and catabolic pathways. AcsA undergoes a two-step reaction. In the first half reaction, AcsA combines acetate with ATP to form acetyl-adenylate (AcAMP) intermediate. In the second half reaction, it can then transfer the acetyl group from AcAMP to the sulfhydryl group of CoA, forming the product AcCoA. This Sinorhizobium medicae (strain WSM419) (Ensifer medicae) protein is Acetyl-coenzyme A synthetase.